Consider the following 202-residue polypeptide: LexA repressor (202 aa).

Positions 28-48 form a DNA-binding region, H-T-H motif; the sequence is RAEIAQRLGFRSPNAAEEHLK. Residues Ser119 and Lys156 each act as for autocatalytic cleavage activity in the active site.

Belongs to the peptidase S24 family. Homodimer.

It catalyses the reaction Hydrolysis of Ala-|-Gly bond in repressor LexA.. Functionally, represses a number of genes involved in the response to DNA damage (SOS response), including recA and lexA. Binds to the 16 bp palindromic sequence 5'-CTGTATATATATACAG-3'. In the presence of single-stranded DNA, RecA interacts with LexA causing an autocatalytic cleavage which disrupts the DNA-binding part of LexA, leading to derepression of the SOS regulon and eventually DNA repair. The protein is LexA repressor of Salmonella agona (strain SL483).